The chain runs to 122 residues: E3 ubiquitin-protein ligase PPP1R11 (122 aa).

The segment covering 1-12 has biased composition (polar residues); that stretch reads MAEVPGTSSETI. The disordered stretch occupies residues 1–33; it reads MAEVPGTSSETITETVQTGTPPPPQQEGRSLTI. A Phosphothreonine modification is found at T20. Residues 55 to 65 are atypical RING finger domain 1; the sequence is HLGRRSSKCCC. A disordered region spans residues 72 to 122; that stretch reads QFGESSSESEGDDEEGCGSAHCILGHGRRGHGQREGGGTTVPPSSGGTNPH. A compositionally biased stretch (acidic residues) spans 78 to 87; it reads SESEGDDEEG. The interval 88–97 is atypical RING finger domain 2; it reads CGSAHCILGH. The span at 111 to 122 shows a compositional bias: low complexity; the sequence is TVPPSSGGTNPH.

It carries out the reaction S-ubiquitinyl-[E2 ubiquitin-conjugating enzyme]-L-cysteine + [acceptor protein]-L-lysine = [E2 ubiquitin-conjugating enzyme]-L-cysteine + N(6)-ubiquitinyl-[acceptor protein]-L-lysine.. The protein operates within protein modification; protein ubiquitination. Its function is as follows. Atypical E3 ubiquitin-protein ligase which ubiquitinates TLR2 at 'Lys-754' leading to its degradation by the proteasome. Inhibitor of protein phosphatase 1. In Danio rerio (Zebrafish), this protein is E3 ubiquitin-protein ligase PPP1R11 (ppp1r11).